The primary structure comprises 262 residues: Tryptophan synthase alpha chain (262 aa).

Active-site proton acceptor residues include glutamate 48 and aspartate 59.

This sequence belongs to the TrpA family. In terms of assembly, tetramer of two alpha and two beta chains.

It catalyses the reaction (1S,2R)-1-C-(indol-3-yl)glycerol 3-phosphate + L-serine = D-glyceraldehyde 3-phosphate + L-tryptophan + H2O. It functions in the pathway amino-acid biosynthesis; L-tryptophan biosynthesis; L-tryptophan from chorismate: step 5/5. Its function is as follows. The alpha subunit is responsible for the aldol cleavage of indoleglycerol phosphate to indole and glyceraldehyde 3-phosphate. The sequence is that of Tryptophan synthase alpha chain from Helicobacter pylori (strain P12).